A 292-amino-acid chain; its full sequence is Probable alpha-L-glutamate ligase (292 aa).

The ATP-grasp domain maps to 104-287 (HQLLAAKGID…VATRIIEHVE (184 aa)). ATP-binding positions include Lys141, 178–179 (EF), Asp187, and 211–213 (RSN). Positions 248, 260, and 262 each coordinate Mg(2+). 3 residues coordinate Mn(2+): Asp248, Glu260, and Asn262.

It belongs to the RimK family. Requires Mg(2+) as cofactor. The cofactor is Mn(2+).

In Stenotrophomonas maltophilia (strain R551-3), this protein is Probable alpha-L-glutamate ligase.